Here is a 246-residue protein sequence, read N- to C-terminus: Small ribosomal subunit protein uS3A (246 aa).

Residues leucine 21 to alanine 92 form the KH type-2 domain. The segment at aspartate 215–alanine 246 is disordered.

It belongs to the universal ribosomal protein uS3 family.

It is found in the cytoplasm. The protein resides in the nucleus. The protein localises to the nucleolus. Its subcellular location is the mitochondrion inner membrane. It localises to the cytoskeleton. It is found in the spindle. It catalyses the reaction 2'-deoxyribonucleotide-(2'-deoxyribose 5'-phosphate)-2'-deoxyribonucleotide-DNA = a 3'-end 2'-deoxyribonucleotide-(2,3-dehydro-2,3-deoxyribose 5'-phosphate)-DNA + a 5'-end 5'-phospho-2'-deoxyribonucleoside-DNA + H(+). Component of the small ribosomal subunit. The ribosome is a large ribonucleoprotein complex responsible for the synthesis of proteins in the cell. Has endonuclease activity and plays a role in repair of damaged DNA. Also involved in other processes including regulation of transcription, translation of its cognate mRNA, spindle formation and chromosome movement during mitosis, and apoptosis. The protein is Small ribosomal subunit protein uS3A (rps3-a) of Xenopus laevis (African clawed frog).